Reading from the N-terminus, the 113-residue chain is Putative single-stranded DNA-binding protein ycf41 (113 aa).

An SSB domain is found at 1 to 101; the sequence is MNYASFIIKI…EVSGFKIYPF (101 aa).

The protein localises to the plastid. Its subcellular location is the chloroplast. This chain is Putative single-stranded DNA-binding protein ycf41 (ycf41), found in Trieres chinensis (Marine centric diatom).